A 337-amino-acid polypeptide reads, in one-letter code: 1-aminocyclopropane-1-carboxylate deaminase (337 aa).

N6-(pyridoxal phosphate)lysine is present on Lys-50. Ser-77 functions as the Nucleophile in the catalytic mechanism.

Belongs to the ACC deaminase/D-cysteine desulfhydrase family. As to quaternary structure, homotrimer. It depends on pyridoxal 5'-phosphate as a cofactor.

The enzyme catalyses 1-aminocyclopropane-1-carboxylate + H2O = 2-oxobutanoate + NH4(+). Catalyzes a cyclopropane ring-opening reaction, the irreversible conversion of 1-aminocyclopropane-1-carboxylate (ACC) to ammonia and alpha-ketobutyrate. Allows growth on ACC as a nitrogen source. The chain is 1-aminocyclopropane-1-carboxylate deaminase from Methylobacterium nodulans (strain LMG 21967 / CNCM I-2342 / ORS 2060).